We begin with the raw amino-acid sequence, 209 residues long: Uracil phosphoribosyltransferase (209 aa).

5-phospho-alpha-D-ribose 1-diphosphate-binding positions include Arg79, Arg104, and 131–139 (DPMLATGGS). Uracil-binding positions include Ile194 and 199–201 (GDA). 5-phospho-alpha-D-ribose 1-diphosphate is bound at residue Asp200.

It belongs to the UPRTase family. Requires Mg(2+) as cofactor.

The enzyme catalyses UMP + diphosphate = 5-phospho-alpha-D-ribose 1-diphosphate + uracil. It participates in pyrimidine metabolism; UMP biosynthesis via salvage pathway; UMP from uracil: step 1/1. With respect to regulation, allosterically activated by GTP. Catalyzes the conversion of uracil and 5-phospho-alpha-D-ribose 1-diphosphate (PRPP) to UMP and diphosphate. This is Uracil phosphoribosyltransferase from Lactobacillus delbrueckii subsp. bulgaricus (strain ATCC 11842 / DSM 20081 / BCRC 10696 / JCM 1002 / NBRC 13953 / NCIMB 11778 / NCTC 12712 / WDCM 00102 / Lb 14).